A 25-amino-acid polypeptide reads, in one-letter code: GDCGCSGASSCTCASGQCTCSGCGK.

Positions 3, 5, 11, 13, 18, 20, and 23 each coordinate Cu(+).

It belongs to the metallothionein superfamily. Type 8 family.

The metallothioneins are involved in the cellular sequestration of toxic metal ions. Binds six copper (cuprous) ions. The chain is Metallothionein from Agaricus bisporus (White button mushroom).